Reading from the N-terminus, the 593-residue chain is Glucose-6-phosphate 1-dehydrogenase, chloroplastic (593 aa).

Residues 116-123 and R150 each bind NADP(+); that span reads GASGDLAK. C168 and C176 are oxidised to a cystine. K253 contributes to the NADP(+) binding site. Residues K253, 283-287, E321, and D340 contribute to the D-glucose 6-phosphate site; that span reads HYLGK. The Proton acceptor role is filled by H345. K438 contacts NADP(+). Positions 441 and 446 each coordinate D-glucose 6-phosphate. 2 residues coordinate NADP(+): R451 and R480. Q482 contributes to the D-glucose 6-phosphate binding site. NADP(+) is bound by residues 488–490 and R573; that span reads YLK.

This sequence belongs to the glucose-6-phosphate dehydrogenase family. As to quaternary structure, homodimer.

It localises to the plastid. Its subcellular location is the chloroplast. It carries out the reaction D-glucose 6-phosphate + NADP(+) = 6-phospho-D-glucono-1,5-lactone + NADPH + H(+). The protein operates within carbohydrate degradation; pentose phosphate pathway; D-ribulose 5-phosphate from D-glucose 6-phosphate (oxidative stage): step 1/3. Its activity is regulated as follows. Regulated by metabolites. Post-translationally inactivated by cysteine-mediated redox modification via the ferredoxin-thioredoxin system in the light and this avoids futile cycles with photosynthetic CO2 fixation. Catalyzes the rate-limiting step of the oxidative pentose-phosphate pathway, which represents a route for the dissimilation of carbohydrates besides glycolysis. The main function of this enzyme is to provide reducing power (NADPH) and pentose phosphates for fatty acid and nucleic acid synthesis which are involved in membrane synthesis and cell division. The chain is Glucose-6-phosphate 1-dehydrogenase, chloroplastic from Nicotiana tabacum (Common tobacco).